The following is a 471-amino-acid chain: MKRPAQLVFVPAPGIGHIVSTVEMAKQLAARDDQLFITVLVMKLPYAQPFTNTDSSISHRINFVNLPEAQPDKQDIVPNPGSFFRMFVENHKSHVRDAVINVLPESDQSESTSKPRLAGFVLDMFSASLIDVANEFKVPSYLFFTSNASALALMSHFQSLRDEGGIDITELTSSTAELAVPSFINPYPAAVLPGSLLDMESTKSTLNHVSKYKQTKGILVNTFMELESHALHYLDSGDKIPPVYPVGPLLNLKSSDEDKASDILRWLDDQPPFSVVFLCFGSMGSFGEAQVKEIACALEHSGHRFLWSLRRPPPQGKRAMPSDYEDLKTVLPEGFLDRTATVGKVIGWAPQAAILGHPATGGFVSHCGWNSTLESLWNGVPIAAWPLYAEQNLNAFQLVVELGLAVEIKMDYRRDSDVVVSAEDIERGIRRVMELDSDVRKRVKEMSEKSKKALVDGGSSYSSLGRFIDKI.

UDP-alpha-D-glucose contacts are provided by residues Ser282, 348 to 349 (WA), 366 to 374 (HCGWNSTLE), and 388 to 391 (YAEQ).

It belongs to the UDP-glycosyltransferase family.

Functionally, glycosyltransferase that possesses chalcone and flavonol 2'-O-glycosyltransferase activity. Converts phloretin to phlorizin (phloretin 2'-O-glucoside), a potent antioxidant. Possesses glycosyltransferase activity toward, naringenin, naringenin chalcone, eriodictyol, eriodictyol chalcone, apigenin, luteolin, kaempferol, quercetin, isoliquiritigenin, butein and caffeic acid. Can convert phloretin to phloretin 4'-O-glucoside and phloretin 4-O-glucoside. The polypeptide is UDP-glycosyltransferase 71A15 (Malus domestica (Apple)).